Here is a 682-residue protein sequence, read N- to C-terminus: MSFQNSLSLSLVNPTHALCMVGMEITLDISKCAPDKCKSFTIRGSPRILIHISSSVIAGKEDTVVWRSMNHPTVALVRMVAPSPTVDEDKVLVSYFCPDQEVPTATAVLFLTGIEISLEADIYRDGQLDMPSDKQAKKKWMWGMNGWGAILLVNCSPNAVGQPDEQSFQEGPREIQNLSQMNVTVEGPTSILQNYQLILHTSEEEAKKTRVYWSQRGSSAYELVVGPNKPVYLLPTFENRRKEAFYVEATEFPSPSFSGLISLSLSLVEKAHDECIPEIPLYKDTVMFRVAPYIFMPSTQMPLEVYLCRELQLQGFVDSVTKLSEKSKVQVVKVYEDPNRQSKWLQDEMAFCYTQAPHKTVSLILDTPRVSKLEDFPMKYTLTPGSGYLIRQTEDHRVASLDSIGNLMVSPPVKAQGKDYPLGRVLIGGSFYPSSEGRDMNKGLREFVYAQQVQAPVELFSDWLMTGHMDQFMCFVPTNDKNNDQKDFRLLLASPSACFELFEQKQKEGYGNVTLFEDIGAEQLLSNGRESKTISQILADKSFREQNTYVEKCISLNRTLLKTELGLEDKDIILIPQLFCLEQLTNVPSNQQSTKLFARPYFPDMLQIIVLGKNLGIPKPFGPKINGTCCLEEKVCGLLEPLGLKCTFIDDFDCYLANIGDVCASAIINRVPFAFKWWKMTP.

2 positions are modified to phosphoserine: serine 2 and serine 434.

It belongs to the protein arginine deiminase family. In terms of assembly, homodimers. Associates with alpha-tubulin. In terms of processing, phosphorylation at Ser-2, possibly by RSK-type kinases, and Ser-434 creates binding sites for 14-3-3 proteins. As to expression, expressed at very high levels in oocytes. Weakly expressed in testis. Expressed in primordial, primary, secondary and Graafian follicles, and in immature oocytes, mature eggs and blastocyst (at protein level).

The protein localises to the cytoplasm. It localises to the nucleus. Its subcellular location is the cytoplasmic vesicle. The protein resides in the secretory vesicle. It is found in the cortical granule. In terms of biological role, structural constituent of cytoplasmic lattices, which plays a key role in early embryonic development. Cytoplasmic lattices consist in fibrous structures found in the cytoplasm of oocytes and preimplantation embryos. They are required to store maternal proteins critical for embryonic development, such as ribosomal proteins and proteins that control epigenetic reprogramming of the preimplantation embryo, and prevent their degradation or activation. In contrast to other members of the family, does not show protein-arginine deiminase activity due to its inability to bind Ca(2+). The polypeptide is Inactive protein-arginine deiminase type-6 (Mus musculus (Mouse)).